Consider the following 212-residue polypeptide: Bilin biosynthesis protein PecF (212 aa).

Belongs to the CpcE/RpcE/PecE family.

Its function is as follows. An enzyme involved in the biosynthesis of bilin. The sequence is that of Bilin biosynthesis protein PecF (pecF) from Mastigocladus laminosus (Fischerella sp.).